The sequence spans 177 residues: Large ribosomal subunit protein uL6 (177 aa).

The protein belongs to the universal ribosomal protein uL6 family. Part of the 50S ribosomal subunit.

This protein binds to the 23S rRNA, and is important in its secondary structure. It is located near the subunit interface in the base of the L7/L12 stalk, and near the tRNA binding site of the peptidyltransferase center. This chain is Large ribosomal subunit protein uL6, found in Rhizobium rhizogenes (strain K84 / ATCC BAA-868) (Agrobacterium radiobacter).